A 316-amino-acid polypeptide reads, in one-letter code: NADH-quinone oxidoreductase subunit H (316 aa).

A run of 8 helical transmembrane segments spans residues 6–26 (PAVVIGILLSTVIVAAWLIWV), 74–94 (FVIAPAIVMVTMLLGFVVVPF), 98–118 (VGVIDFNFGLLYFFALSSLAV), 145–165 (ISYEVFMGLAAMGVVMLAGSF), 177–197 (GWYVLPQFAGFLAFLVAAVAE), 233–253 (YLGITLNSAILVTLFFGGWLG), 256–276 (FLPPLAWFILKTLVFILFFIL), and 296–316 (VMLPLTLANIVVTGAVGLSVP).

The protein belongs to the complex I subunit 1 family. In terms of assembly, NDH-1 is composed of 14 different subunits. Subunits NuoA, H, J, K, L, M, N constitute the membrane sector of the complex.

It is found in the cell inner membrane. It catalyses the reaction a quinone + NADH + 5 H(+)(in) = a quinol + NAD(+) + 4 H(+)(out). Its function is as follows. NDH-1 shuttles electrons from NADH, via FMN and iron-sulfur (Fe-S) centers, to quinones in the respiratory chain. The immediate electron acceptor for the enzyme in this species is believed to be ubiquinone. Couples the redox reaction to proton translocation (for every two electrons transferred, four hydrogen ions are translocated across the cytoplasmic membrane), and thus conserves the redox energy in a proton gradient. This subunit may bind ubiquinone. In Methylococcus capsulatus (strain ATCC 33009 / NCIMB 11132 / Bath), this protein is NADH-quinone oxidoreductase subunit H.